A 211-amino-acid polypeptide reads, in one-letter code: Bcl-2-related ovarian killer protein homolog B (211 aa).

Residues 32–44 (KELCRDFIHSRIT) carry the BH4 motif. A BH3 motif is present at residues 67 to 83 (VSVVLLKLGDELECMRP). The BH1 motif lies at 113–132 (EVIAMGITWGKVVAIYAVAA). The BH2 motif lies at 165-179 (WLKKRGGWVDILKCV). The chain crosses the membrane as a helical span at residues 190–210 (WLSTAVLTWREFIKTMYVYLT).

This sequence belongs to the Bcl-2 family. As to expression, expressed strongly in ovary and more weakly in eye. Little expression in other tissues examined.

It is found in the membrane. Its function is as follows. May play a role in apoptosis. Does not appear to show pro-apoptotic activity when expressed ectopically in early embryos. This chain is Bcl-2-related ovarian killer protein homolog B (bokb), found in Danio rerio (Zebrafish).